Consider the following 321-residue polypeptide: Olfactory receptor 52N2 (321 aa).

The Extracellular portion of the chain corresponds to 1–27; that stretch reads MSGDNSSSLTPGFFILNGVPGLEATHI. N-linked (GlcNAc...) asparagine glycosylation occurs at Asn-5. A helical transmembrane segment spans residues 28–48; that stretch reads WISLPFCFMYIIAVVGNCGLI. Residues 49–56 are Cytoplasmic-facing; it reads CLISHEEA. Residues 57-77 traverse the membrane as a helical segment; it reads LHRPMYYFLALLSFTDVTLCT. Over 78–101 the chain is Extracellular; the sequence is TMVPNMLCIFWFNLKEIDFNACLA. Cys-99 and Cys-191 are joined by a disulfide. A helical membrane pass occupies residues 102-122; it reads QMFFVHMLTGMESGVLMLMAL. The Cytoplasmic segment spans residues 123-141; sequence DRYVAICYPLRYATILTNP. Residues 142–162 traverse the membrane as a helical segment; sequence VIAKAGLATFLRNVMLIIPFT. Topologically, residues 163-198 are extracellular; that stretch reads LLTKRLPYCRGNFIPHTYCDHMSVAKVSCGNFKVNA. Residues 199 to 219 form a helical membrane-spanning segment; that stretch reads IYGLMVALLIGVFDICCISVS. Topologically, residues 220-239 are cytoplasmic; the sequence is YTMILQAVMSLSSADARHKA. Residues 240 to 260 form a helical membrane-spanning segment; the sequence is FSTCTSHMCSIVITYVAAFFT. The Extracellular segment spans residues 261 to 276; it reads FFTHRFVGHNIPNHIH. A helical membrane pass occupies residues 277–297; the sequence is IIVANLYLLLPPTMNPIVYGV. Over 298–321 the chain is Cytoplasmic; it reads KTKQIQEGVIKFLLGDKVSFTYDK.

This sequence belongs to the G-protein coupled receptor 1 family.

It localises to the cell membrane. In terms of biological role, odorant receptor. In Homo sapiens (Human), this protein is Olfactory receptor 52N2 (OR52N2).